We begin with the raw amino-acid sequence, 333 residues long: UDP-3-O-acylglucosamine N-acyltransferase 2 (333 aa).

Histidine 243 (proton acceptor) is an active-site residue.

Belongs to the transferase hexapeptide repeat family. LpxD subfamily. Homotrimer.

It carries out the reaction a UDP-3-O-[(3R)-3-hydroxyacyl]-alpha-D-glucosamine + a (3R)-hydroxyacyl-[ACP] = a UDP-2-N,3-O-bis[(3R)-3-hydroxyacyl]-alpha-D-glucosamine + holo-[ACP] + H(+). The protein operates within bacterial outer membrane biogenesis; LPS lipid A biosynthesis. Functionally, catalyzes the N-acylation of UDP-3-O-acylglucosamine using 3-hydroxyacyl-ACP as the acyl donor. Is involved in the biosynthesis of lipid A, a phosphorylated glycolipid that anchors the lipopolysaccharide to the outer membrane of the cell. The protein is UDP-3-O-acylglucosamine N-acyltransferase 2 of Koribacter versatilis (strain Ellin345).